Reading from the N-terminus, the 254-residue chain is Small ribosomal subunit protein uS3 (254 aa).

The KH type-2 domain maps to 39–109 (IRNYISARLK…EVKIDVIEVI (71 aa)). The segment at 220 to 254 (EEMKKMQERRNDSRGRGRGDGRGAKRRRRPAAKKA) is disordered. Residues 221 to 242 (EMKKMQERRNDSRGRGRGDGRG) are compositionally biased toward basic and acidic residues. Basic residues predominate over residues 243–254 (AKRRRRPAAKKA).

This sequence belongs to the universal ribosomal protein uS3 family. Part of the 30S ribosomal subunit. Forms a tight complex with proteins S10 and S14.

Binds the lower part of the 30S subunit head. Binds mRNA in the 70S ribosome, positioning it for translation. The chain is Small ribosomal subunit protein uS3 from Chlorobaculum parvum (strain DSM 263 / NCIMB 8327) (Chlorobium vibrioforme subsp. thiosulfatophilum).